Here is a 117-residue protein sequence, read N- to C-terminus: Iron-sulfur cluster insertion protein ErpA (117 aa).

C45, C109, and C111 together coordinate iron-sulfur cluster.

Belongs to the HesB/IscA family. In terms of assembly, homodimer. The cofactor is iron-sulfur cluster.

Functionally, required for insertion of 4Fe-4S clusters for at least IspG. The chain is Iron-sulfur cluster insertion protein ErpA from Chromohalobacter salexigens (strain ATCC BAA-138 / DSM 3043 / CIP 106854 / NCIMB 13768 / 1H11).